A 302-amino-acid polypeptide reads, in one-letter code: Epoxyqueuosine reductase (302 aa).

Asp128 acts as the Proton donor in catalysis. Positions 170–202 constitute a 4Fe-4S ferredoxin-type 1 domain; sequence LPLQADGPIRDYCGTCTACIDACPTDAITPYEV. Residues Cys182, Cys185, Cys188, Cys192, Cys207, Cys234, Cys237, and Cys241 each contribute to the [4Fe-4S] cluster site. The 4Fe-4S ferredoxin-type 2 domain occupies 221–251; sequence NEFKGKMENWIFGCDICQDVCPWNSFARPHS.

The protein belongs to the QueG family. In terms of assembly, monomer. The cofactor is cob(II)alamin. Requires [4Fe-4S] cluster as cofactor.

It localises to the cytoplasm. It carries out the reaction epoxyqueuosine(34) in tRNA + AH2 = queuosine(34) in tRNA + A + H2O. Its pathway is tRNA modification; tRNA-queuosine biosynthesis. Functionally, catalyzes the conversion of epoxyqueuosine (oQ) to queuosine (Q), which is a hypermodified base found in the wobble positions of tRNA(Asp), tRNA(Asn), tRNA(His) and tRNA(Tyr). This is Epoxyqueuosine reductase from Leadbetterella byssophila (strain DSM 17132 / JCM 16389 / KACC 11308 / NBRC 106382 / 4M15).